We begin with the raw amino-acid sequence, 234 residues long: Glycerol uptake facilitator protein (234 aa).

6 consecutive transmembrane segments (helical) span residues 9–29 (FLGT…VVLP), 37–57 (GWIV…FVSG), 61–81 (PAHL…LPWA), 83–103 (VLPY…LVWL), 135–155 (LISE…LGLY), and 159–179 (AGIG…SLGG). The NPA 1 signature appears at 65–67 (NPA). Positions 186-188 (NPA) match the NPA 2 motif. A helical membrane pass occupies residues 214-234 (WIPVVGPVIGAALAVLVFSLF).

Belongs to the MIP/aquaporin (TC 1.A.8) family.

It is found in the cell membrane. The enzyme catalyses glycerol(in) = glycerol(out). In terms of biological role, mediates glycerol diffusion across the cytoplasmic membrane via a pore-type mechanism. In Streptococcus pneumoniae (strain ATCC BAA-255 / R6), this protein is Glycerol uptake facilitator protein (glpF).